Here is a 624-residue protein sequence, read N- to C-terminus: 1-deoxy-D-xylulose-5-phosphate synthase (624 aa).

Residues histidine 74 and 115-117 (GHS) contribute to the thiamine diphosphate site. Position 146 (aspartate 146) interacts with Mg(2+). Thiamine diphosphate is bound by residues 147–148 (GA), asparagine 175, tyrosine 286, and glutamate 367. Asparagine 175 provides a ligand contact to Mg(2+).

The protein belongs to the transketolase family. DXPS subfamily. Homodimer. Mg(2+) is required as a cofactor. The cofactor is thiamine diphosphate.

The enzyme catalyses D-glyceraldehyde 3-phosphate + pyruvate + H(+) = 1-deoxy-D-xylulose 5-phosphate + CO2. It functions in the pathway metabolic intermediate biosynthesis; 1-deoxy-D-xylulose 5-phosphate biosynthesis; 1-deoxy-D-xylulose 5-phosphate from D-glyceraldehyde 3-phosphate and pyruvate: step 1/1. In terms of biological role, catalyzes the acyloin condensation reaction between C atoms 2 and 3 of pyruvate and glyceraldehyde 3-phosphate to yield 1-deoxy-D-xylulose-5-phosphate (DXP). This Alkaliphilus oremlandii (strain OhILAs) (Clostridium oremlandii (strain OhILAs)) protein is 1-deoxy-D-xylulose-5-phosphate synthase.